Here is a 257-residue protein sequence, read N- to C-terminus: Flap endonuclease Xni (257 aa).

Asp109 contributes to the Mg(2+) binding site. Positions 165-255 (LKPEQLADYW…FNLQDIRYEK (91 aa)) constitute a 5'-3' exonuclease domain. Positions 176, 177, 187, and 190 each coordinate K(+). Residues 189–194 (GIGPKA) are interaction with DNA.

The protein belongs to the Xni family. Mg(2+) serves as cofactor. It depends on K(+) as a cofactor.

Functionally, has flap endonuclease activity. During DNA replication, flap endonucleases cleave the 5'-overhanging flap structure that is generated by displacement synthesis when DNA polymerase encounters the 5'-end of a downstream Okazaki fragment. The chain is Flap endonuclease Xni from Aliivibrio salmonicida (strain LFI1238) (Vibrio salmonicida (strain LFI1238)).